The primary structure comprises 366 residues: Cyclic amide hydrolase (366 aa).

Residues 1-103 (MKVGVHKLAM…TLFTRAPDDG (103 aa)) form an RU A region. Substrate contacts are provided by residues arginine 51 and 82–83 (SG). The interval 110 to 247 (RLALGIGITR…CEVLLFGNAP (138 aa)) is RU B. Residue lysine 160 is part of the active site. Substrate-binding positions include arginine 192, 230–231 (SA), arginine 327, and 346–347 (SG). The active-site Nucleophile is serine 230. The tract at residues 253–366 (FRIGHGVLKD…AAPIAAIVRA (114 aa)) is RU C.

The protein belongs to the cyclic amide hydrolase (CyAH) family. As to quaternary structure, homotetramer.

In terms of biological role, cyclic amide hydrolase of unknown substrate specificity. Catalyzes the hydrolytic ring-opening of a cyclic amide. Does not act on cyanuric acid nor barbituric acid. This Azorhizobium caulinodans (strain ATCC 43989 / DSM 5975 / JCM 20966 / LMG 6465 / NBRC 14845 / NCIMB 13405 / ORS 571) protein is Cyclic amide hydrolase.